A 265-amino-acid polypeptide reads, in one-letter code: Transcription factor LBX1b (265 aa).

The segment at residues 121 to 180 is a DNA-binding region (homeobox); that stretch reads RRKSRTAFTNHQLYELEKRFLHQKYLSPADRDQIAHQLGLTNAQVITWFQNRRAKLKRDL.

The protein localises to the nucleus. Functionally, transcription factor required for the development of hypaxial muscles. This is Transcription factor LBX1b from Danio rerio (Zebrafish).